Reading from the N-terminus, the 137-residue chain is MRQFIKLSLLVFVLLFLSELICRFSLRLVNSIKARYKSSVFSYTACLLFLKSFQNFSNAFQKLANWVFWFENDVNELLSIFYFNFDQKSEKVDYNFFNGYKVTAQKVVEKEQLLTCKLSDYYRLFRDKTFWFELINN.

This is an uncharacterized protein from Mycoplasma genitalium (strain ATCC 33530 / DSM 19775 / NCTC 10195 / G37) (Mycoplasmoides genitalium).